The following is a 91-amino-acid chain: NADH-ubiquinone oxidoreductase chain 4L (91 aa).

The next 3 membrane-spanning stretches (helical) occupy residues 8-28 (LYFI…MILL), 38-58 (LLML…VFLI), and 59-79 (SIVC…FFYG).

It belongs to the complex I subunit 4L family.

It localises to the mitochondrion membrane. It catalyses the reaction a ubiquinone + NADH + 5 H(+)(in) = a ubiquinol + NAD(+) + 4 H(+)(out). Core subunit of the mitochondrial membrane respiratory chain NADH dehydrogenase (Complex I) that is believed to belong to the minimal assembly required for catalysis. Complex I functions in the transfer of electrons from NADH to the respiratory chain. The immediate electron acceptor for the enzyme is believed to be ubiquinone. This Rhipicephalus sanguineus (Brown dog tick) protein is NADH-ubiquinone oxidoreductase chain 4L (ND4L).